The primary structure comprises 1365 residues: Homeotic protein spalt-major (1365 aa).

Disordered regions lie at residues 47-194, 270-298, and 322-363; these read SADK…EVTL, QAKQ…EEEE, and LINA…NTHK. Composition is skewed to low complexity over residues 63-76 and 87-99; these read SPLT…SPSR and EQST…PEQS. The segment covering 103 to 117 has biased composition (basic and acidic residues); it reads HQLENDIKSEAKSEI. Over residues 146-157 the composition is skewed to low complexity; sequence PSSPVAEASAEE. Basic and acidic residues predominate over residues 159-181; the sequence is ATERTPEKEKEKDVEVDVEKPDE. The segment covering 275–298 has biased composition (acidic residues); sequence EDTEEDADQEQDQEQETDTYEEEE. Over residues 346–363 the composition is skewed to basic and acidic residues; it reads HDHESQPNRRPSLDNTHK. 2 consecutive C2H2-type zinc fingers follow at residues 451–473 and 479–501; these read HRCR…IRSH and FKCN…FQRH. 2 disordered regions span residues 508-554 and 586-716; these read VPMN…ASFP and ELPT…TPGQ. The segment covering 530 to 539 has biased composition (polar residues); it reads MSPTDSSPNH. Positions 540-554 are enriched in pro residues; the sequence is SPAPPPLGSAPASFP. Composition is skewed to basic and acidic residues over residues 603–622 and 638–662; these read PQVK…HEQE and VRIK…EPRR. Phosphoserine is present on residues serine 739 and serine 744. The tract at residues 740 to 772 is disordered; it reads PEHHSPVRSPAGGALPPGVPPPPHHHPHHMARS. 3 C2H2-type zinc fingers span residues 824 to 846, 852 to 874, and 884 to 906; these read NQCV…YRTH, FKCR…MAVH, and HQCP…IRLH. Disordered regions lie at residues 948-1012, 1030-1129, and 1146-1241; these read ALPG…RSGD, VVNT…ILTS, and HHLQ…GARP. Residues 976–991 are compositionally biased toward acidic residues; it reads DMDDNMDCGEDYDDDV. The span at 1040–1054 shows a compositional bias: low complexity; the sequence is SSASSHGHSVGSTSA. The span at 1055 to 1079 shows a compositional bias: polar residues; the sequence is PTSPSVHASSQVIKRSSSPARSEAS. Phosphoserine is present on residues serine 1076 and serine 1079. Low complexity-rich tracts occupy residues 1085–1100, 1114–1123, and 1146–1168; these read LTPR…SRSP, RSPSGSSHAS, and HHLQ…AAAA. Over residues 1181–1191 the composition is skewed to basic and acidic residues; the sequence is QHQEQLRREAA. Over residues 1192 to 1218 the composition is skewed to low complexity; sequence EAQQKAAAAAAAAAAAAAAQRQTPPQA. 2 consecutive C2H2-type zinc fingers follow at residues 1289 to 1311 and 1317 to 1339; these read TTCG…YRSH and FKCS…MLTH.

This sequence belongs to the sal C2H2-type zinc-finger protein family.

The protein localises to the nucleus. Its function is as follows. Required for the establishment of the posterior-most head and the anterior-most tail segments of the embryo. Probably function as a transcriptional regulator. Could repress the transcription of the tsh gene. The protein is Homeotic protein spalt-major (salm) of Drosophila melanogaster (Fruit fly).